A 263-amino-acid chain; its full sequence is Methylesterase 18 (263 aa).

Catalysis depends on S80, which acts as the Acyl-ester intermediate. Active-site charge relay system residues include D212 and H240.

The protein belongs to the AB hydrolase superfamily. Methylesterase family.

The catalysed reaction is methyl (indol-3-yl)acetate + H2O = (indol-3-yl)acetate + methanol + H(+). Its pathway is plant hormone biosynthesis. Functionally, methylesterase shown to have methyl indole-3-acetic acid (MeIAA) esterase activity in vitro. This is Methylesterase 18 from Arabidopsis thaliana (Mouse-ear cress).